The sequence spans 235 residues: Pyridoxine 5'-phosphate synthase (235 aa).

Asn6 contributes to the 3-amino-2-oxopropyl phosphate binding site. 8–9 serves as a coordination point for 1-deoxy-D-xylulose 5-phosphate; the sequence is DH. Residue Arg17 participates in 3-amino-2-oxopropyl phosphate binding. His42 serves as the catalytic Proton acceptor. Residues Arg44 and His49 each contribute to the 1-deoxy-D-xylulose 5-phosphate site. Glu69 serves as the catalytic Proton acceptor. Residue Thr99 participates in 1-deoxy-D-xylulose 5-phosphate binding. Residue His188 is the Proton donor of the active site. 3-amino-2-oxopropyl phosphate is bound by residues Gly189 and 210–211; that span reads GH.

The protein belongs to the PNP synthase family. Homooctamer; tetramer of dimers.

It localises to the cytoplasm. The enzyme catalyses 3-amino-2-oxopropyl phosphate + 1-deoxy-D-xylulose 5-phosphate = pyridoxine 5'-phosphate + phosphate + 2 H2O + H(+). It functions in the pathway cofactor biosynthesis; pyridoxine 5'-phosphate biosynthesis; pyridoxine 5'-phosphate from D-erythrose 4-phosphate: step 5/5. Its function is as follows. Catalyzes the complicated ring closure reaction between the two acyclic compounds 1-deoxy-D-xylulose-5-phosphate (DXP) and 3-amino-2-oxopropyl phosphate (1-amino-acetone-3-phosphate or AAP) to form pyridoxine 5'-phosphate (PNP) and inorganic phosphate. This Wolbachia sp. subsp. Drosophila simulans (strain wRi) protein is Pyridoxine 5'-phosphate synthase.